An 89-amino-acid polypeptide reads, in one-letter code: Putative membrane protein insertion efficiency factor (89 aa).

Residues V68–L89 are disordered. Basic and acidic residues predominate over residues N77–L89.

The protein belongs to the UPF0161 family.

The protein localises to the cell inner membrane. Its function is as follows. Could be involved in insertion of integral membrane proteins into the membrane. The chain is Putative membrane protein insertion efficiency factor from Burkholderia mallei (strain SAVP1).